A 251-amino-acid chain; its full sequence is tRNA pseudouridine synthase A 1 (251 aa).

Aspartate 52 acts as the Nucleophile in catalysis. Position 110 (tyrosine 110) interacts with substrate.

This sequence belongs to the tRNA pseudouridine synthase TruA family. As to quaternary structure, homodimer.

The catalysed reaction is uridine(38/39/40) in tRNA = pseudouridine(38/39/40) in tRNA. In terms of biological role, formation of pseudouridine at positions 38, 39 and 40 in the anticodon stem and loop of transfer RNAs. The polypeptide is tRNA pseudouridine synthase A 1 (Desulfotalea psychrophila (strain LSv54 / DSM 12343)).